The following is a 79-amino-acid chain: Small ribosomal subunit protein bS18 (79 aa).

It belongs to the bacterial ribosomal protein bS18 family. In terms of assembly, part of the 30S ribosomal subunit. Forms a tight heterodimer with protein bS6.

Binds as a heterodimer with protein bS6 to the central domain of the 16S rRNA, where it helps stabilize the platform of the 30S subunit. The sequence is that of Small ribosomal subunit protein bS18 from Streptococcus pneumoniae serotype 19F (strain G54).